The following is a 282-amino-acid chain: E3 ubiquitin-protein ligase SIAH1 (282 aa).

Residues 1–17 (MSRQTATALPTGTSKCP) are compositionally biased toward polar residues. The tract at residues 1–22 (MSRQTATALPTGTSKCPPSQRV) is disordered. Residue Ser19 is modified to Phosphoserine; by ATM and ATR. The segment at 41–76 (CPVCFDYVLPPILQCQSGHLVCSNCRPKLTCCPTCR) adopts an RING-type zinc-finger fold. The interval 90–282 (VANSVLFPCK…LGINVTISMC (193 aa)) is SBD. Residues 93–153 (SVLFPCKYAS…VMPHLMHQHK (61 aa)) form an SIAH-type zinc finger. The Zn(2+) site is built by Cys98, Cys105, His117, Cys121, Cys128, Cys135, His147, and His152.

This sequence belongs to the SINA (Seven in absentia) family. In terms of assembly, homodimer. Component of some large E3 complex composed of UBE2D1, SIAH1, CACYBP/SIP, SKP1, APC and TBL1X. Interacts with UBE2I. Interacts with alpha-tubulin. Interacts with PEG10, which may inhibit its activity. Interacts with PEG3 and HIPK2. Interacts with group 1 glutamate receptors GRM1 and GRM5. Interacts with DAB1, which may inhibit its activity. Interacts with UBE2E2. Interacts with SNCAIP. Interacts with HIPK2; the interaction is promoted by DAZAP2 and results in SIAH1-mediated ubiquitination and subsequent proteasomal degradation of HIPK2. Interacts with DAZAP2; the interaction is decreased following phosphorylation of DAZAP2 by HIPK2. Interacts with GAPDH; leading to stabilize SIAH1. Interacts with Bassoon/BSN and Piccolo/PLCO; these interactions negatively regulate SIAH1 E3 ligase activity. Interacts with DCC. Interacts with AXIN1; catalyzes AXIN1 ubiquitination and subsequent proteasome-mediated ubiquitin-dependent degradation. In terms of processing, phosphorylated on Ser-19 by ATM and ATR. This phosphorylation disrupts SIAH1 interaction with HIPK2, and subsequent proteasomal degradation of HIPK2.

Its subcellular location is the cytoplasm. The protein resides in the nucleus. The enzyme catalyses S-ubiquitinyl-[E2 ubiquitin-conjugating enzyme]-L-cysteine + [acceptor protein]-L-lysine = [E2 ubiquitin-conjugating enzyme]-L-cysteine + N(6)-ubiquitinyl-[acceptor protein]-L-lysine.. It functions in the pathway protein modification; protein ubiquitination. In terms of biological role, E3 ubiquitin-protein ligase that mediates ubiquitination and subsequent proteasomal degradation of target proteins. E3 ubiquitin ligases accept ubiquitin from an E2 ubiquitin-conjugating enzyme in the form of a thioester and then directly transfers the ubiquitin to targeted substrates. Mediates E3 ubiquitin ligase activity either through direct binding to substrates or by functioning as the essential RING domain subunit of larger E3 complexes. Triggers the ubiquitin-mediated degradation of many substrates, including proteins involved in transcription regulation (ELL2, MYB, POU2AF1, PML and RBBP8), a cell surface receptor (DCC), cytoplasmic signal transduction molecules (KLF10/TIEG1 and NUMB), an antiapoptotic protein (BAG1), a microtubule motor protein (KIF22), a protein involved in synaptic vesicle function in neurons (SYP), a structural protein (CTNNB1) and SNCAIP. Confers constitutive instability to HIPK2 through proteasomal degradation. It is thereby involved in many cellular processes such as apoptosis, tumor suppression, cell cycle, axon guidance, transcription, spermatogenesis and TNF-alpha signaling. Has some overlapping function with SIAH2. Induces apoptosis in cooperation with PEG3. Upon nitric oxid (NO) generation that follows apoptotic stimulation, interacts with S-nitrosylated GAPDH, mediating the translocation of GAPDH to the nucleus. GAPDH acts as a stabilizer of SIAH1, facilitating the degradation of nuclear proteins. Mediates ubiquitination and degradation of EGLN2 and EGLN3 in response to the unfolded protein response (UPR), leading to their degradation and subsequent stabilization of ATF4. Also part of the Wnt signaling pathway in which it mediates the Wnt-induced ubiquitin-mediated proteasomal degradation of AXIN1. The sequence is that of E3 ubiquitin-protein ligase SIAH1 (Siah1) from Rattus norvegicus (Rat).